The following is a 625-amino-acid chain: Probable thymidylate synthase (625 aa).

The disordered stretch occupies residues 224–323 (AVKNIDGQDD…PEPPVPFTSS (100 aa)). The segment covering 243 to 257 (EEYDDDDDDDVDDNE) has biased composition (acidic residues). Composition is skewed to polar residues over residues 258-269 (QSNSMIETSANA) and 293-312 (SQAP…NVTT). Residues Arg-350 and 477-478 (RR) contribute to the dUMP site. Cys-497 (nucleophile) is an active-site residue. Residues 524–527 (RSAD), Asn-535, and 565–567 (HIY) each bind dUMP. Residue Asp-527 participates in (6R)-5,10-methylene-5,6,7,8-tetrahydrofolate binding.

In the N-terminal section; belongs to the HFCD (homo-oligomeric flavin containing Cys decarboxylase) superfamily. The protein in the C-terminal section; belongs to the thymidylate synthase family.

The protein localises to the cytoplasm. It catalyses the reaction dUMP + (6R)-5,10-methylene-5,6,7,8-tetrahydrofolate = 7,8-dihydrofolate + dTMP. It participates in pyrimidine metabolism; dTTP biosynthesis. Functionally, required for both nuclear and mitochondrial DNA synthesis. This Schizosaccharomyces pombe (strain 972 / ATCC 24843) (Fission yeast) protein is Probable thymidylate synthase.